Consider the following 510-residue polypeptide: ATP synthase subunit alpha (510 aa).

169–176 contacts ATP; it reads GDRQTGKT.

This sequence belongs to the ATPase alpha/beta chains family. In terms of assembly, F-type ATPases have 2 components, CF(1) - the catalytic core - and CF(0) - the membrane proton channel. CF(1) has five subunits: alpha(3), beta(3), gamma(1), delta(1), epsilon(1). CF(0) has four main subunits: a(1), b(1), b'(1) and c(9-12).

The protein localises to the cell inner membrane. It catalyses the reaction ATP + H2O + 4 H(+)(in) = ADP + phosphate + 5 H(+)(out). In terms of biological role, produces ATP from ADP in the presence of a proton gradient across the membrane. The alpha chain is a regulatory subunit. The sequence is that of ATP synthase subunit alpha from Rhodopseudomonas palustris (strain ATCC BAA-98 / CGA009).